A 662-amino-acid polypeptide reads, in one-letter code: Hypoxia-inducible factor 3-alpha (662 aa).

The segment at 1-25 (MDWDQDRSSTELRKEKSRDAARSRR) is disordered. The region spanning 12–65 (LRKEKSRDAARSRRSQETEVLYQLAHTLPFARGVSAHLDKASIMRLTISYLRMH) is the bHLH domain. The segment at 75-98 (QVRKEGEPLDACYLKALEGFVMVL) is nuclear localization signal. 2 consecutive PAS domains span residues 80 to 150 (GEPL…PSLS) and 225 to 295 (PHPA…LSKG). The segment at 228–272 (ASLEPPLGRGAFLSRHSLDMKFTYCDERIAEVAGYSPDDLIGCSA) is nuclear export signal. The interval 352–379 (EQTEQHTRRPPQLGTSSKKGIPGNSLDP) is disordered. The LRRLL signature appears at 410 to 413 (LRRL). Disordered regions lie at residues 417–445 (ILDG…ADLP) and 459–480 (STAR…PDTP). Low complexity predominate over residues 421 to 433 (PPTAATPSTPQAA). Residues 448-581 (LAVGLENAHR…SEDKGLELLE (134 aa)) are ODD. The segment at 450 to 501 (VGLENAHRLSTARKNKTMETDLDIAQDPDTPDLEMLAPYISMDDDFQLNSSE) is NTAD. Residue Lys463 forms a Glycyl lysine isopeptide (Lys-Gly) (interchain with G-Cter in ubiquitin) linkage. Over residues 469–480 (TDLDIAQDPDTP) the composition is skewed to acidic residues. Positions 485-492 (LAPYISMD) match the LAPYISMD motif. At Pro487 the chain carries 4-hydroxyproline. Positions 500–595 (SEQLPKVHRR…KRSPRLEPGS (96 aa)) are disordered. Positions 505–521 (KVHRRPPRTARRPRARS) are enriched in basic residues. A Glycyl lysine isopeptide (Lys-Gly) (interchain with G-Cter in ubiquitin) cross-link involves residue Lys565. Residues 572-584 (SEDKGLELLETKP) are compositionally biased toward basic and acidic residues.

In terms of assembly, interacts with ARNT, BAD, BCL2L2, EPAS1, HIF1A, MCL1 and VHL. Post-translationally, in normoxia, hydroxylated on Pro-487 in the oxygen-dependent degradation domain (ODD) by PHD. The hydroxylated proline promotes interaction with VHL, initiating rapid ubiquitination and subsequent proteasomal degradation. In terms of processing, ubiquitinated; ubiquitination occurs in a VHL- and oxygen-dependent pathway and subsequently targeted for proteasomal degradation. In terms of tissue distribution, expressed in the perivenous zone of the liver. Expressed in all tissues examined during normoxia. Expressed in brain and lung. Expressed in periportal and perivenous hepatocytes and in endothelial cells of the central vein (at protein level). Highest expression seen in the cerebral cortex, hippocampus, and lung. Low expression in myocardial tissue and liver.

The protein resides in the nucleus. The protein localises to the cytoplasm. It localises to the nucleus speckle. It is found in the mitochondrion. Functionally, acts as a transcriptional regulator in adaptive response to low oxygen tension. Attenuates the ability of transcription factor HIF1A, EPAS1 and the HIF1A-ARNT complex to bind to hypoxia-responsive elements (HRE) located within the enhancer/promoter of hypoxia-inducible target genes and hence inhibits HRE-driven transcriptional activation. Functions as an inhibitor of angiogenesis in hypoxic cells of the cornea. Plays a role in the development of the cardiorespiratory system. May also be involved in apoptosis. May act as a tumor suppressor. In Rattus norvegicus (Rat), this protein is Hypoxia-inducible factor 3-alpha.